Here is a 1194-residue protein sequence, read N- to C-terminus: MAIRTGFCNPFLTQASGIKYNPRTGRGSNREFLHSYKTTMSSFQFLAPKCLDEDVPMEERKGVHVGTLSRPPKVYCNGKEVPILDFRCSSPWPRRVNIWGEIDFRGDKFDPRFNTFHVYDIVETTEAASNGDVSRFATATRPLGTVITLLGMSRCGKRVAVHVYGICQYFYINKAEVDTACGIRSCSELSVLLAECLRSSMITQNDATLNGDKNAFHGTSFKSASPESFRVEVIERTDVYYYDTQPCAFYRVYSPSSKFTNYLCDNFHPELKKYEGRVDATTRFLMDNPGFVSFGWYQLKPGVDGERVRVRPASRQLTLSDVEIDCMSDNLQAIPNDDSWPDYKLLCFDIECKSGGSNELAFPDATHLEDLVIQISCLLYSIPRQSLEHILLFSLGSCDLPQRYVQEMKDAGLPEPTVLEFDSEFELLIAFMTLVKQYAPEFATGYNIVNFDWAFIMEKLNSIYSLKLDGYGSINRGGLFKIWDVGKSGFQRRSKVKINGLISLDMYAIATEKLKLSSYKLDSVAREALNESKRDLPYKDIPGYYASGPNTRGIIGEYCIQDSALVGKLFFKYLPHLELSAVARLARITLTKAIYDGQQVRIYTCLLGLASSRGFILPDGGYPATFEYKDVIPDVGDVEEEMDEDESVSPTGTSSGRNVGYKGARVFDPDTGFYIDPVVVLDFASLYPSIIQAHNLCFTTLTLNFETVKRLNPSDYATFTVGGKRLFFVRSNVRESLLGVLLKDWLAMRKAIRARIPGSSSDEAVLLDKQQAAIKVVCNSVYGFTGVAQGFLPCLYVAATVTTIGRQMLLSTRDYIHNNWAAFERFITAFPDIESSVLSQKAYEVKVIYGDTDSVFIRFKGVGVEGIAKIGEKMAHIISTALFCPPIKLECEKTFIKLLLITKKKYIGVIYGGKVLMKGVDLVRKNNCQFINDYARKLVELLLYDDTVSRAAAEASCVSIAEWNRRAMPSGMAGFGRIIADAHRQITSPKLDINKFVMTAELSRPPSAYINRRLAHLTVYYKLVMRQGQIPNVRERIPYVIVAPTDEVEADAKSVALLRGDPLQNTAGKRCGEAKRKLIISDLAEDPIHVTSHGLSLNIDYYFSHLIGTASVTFKALFGNDTKLTERLLKRFIPETRVVNVKMLNRLQAAGFVCIHAPRWDNKMNTEAEITEEEQSHQIMRRVFCIPKAILHQS.

Belongs to the DNA polymerase type-B family. Forms a complex with the ssDNA-binding protein, the DNA polymerase processivity factor, and the alkaline exonuclease. Interacts with the helicase-primase complex composed of the primase, the helicase and the primase-associated factor; this interaction may coordinate leading and lagging strand DNA synthesis at the replication fork.

It is found in the host nucleus. It carries out the reaction DNA(n) + a 2'-deoxyribonucleoside 5'-triphosphate = DNA(n+1) + diphosphate. The catalysed reaction is Endonucleolytic cleavage to 5'-phosphomonoester.. Functionally, replicates viral genomic DNA. The replication complex is composed of six viral proteins: the DNA polymerase, processivity factor, primase, primase-associated factor, helicase, and ssDNA-binding protein. Additionally, the polymerase contains an intrinsic ribonuclease H (RNase H) activity that specifically degrades RNA/DNA heteroduplexes or duplex DNA substrates in the 5' to 3' direction. Therefore, it can catalyze the excision of the RNA primers that initiate the synthesis of Okazaki fragments at a replication fork during viral DNA replication. The sequence is that of DNA polymerase catalytic subunit from Varicella-zoster virus (strain Oka vaccine) (HHV-3).